The following is a 273-amino-acid chain: F-actin-capping protein subunit alpha (273 aa).

The protein belongs to the F-actin-capping protein alpha subunit family. In terms of assembly, component of the F-actin capping complex, composed of a heterodimer of an alpha and a beta subunit.

The protein localises to the cytoplasm. It localises to the cytoskeleton. It is found in the actin patch. F-actin-capping proteins bind in a Ca(2+)-independent manner to the fast growing ends of actin filaments (barbed end) thereby blocking the exchange of subunits at these ends. Unlike other capping proteins (such as gelsolin and severin), these proteins do not sever actin filaments. This chain is F-actin-capping protein subunit alpha (cap1), found in Aspergillus oryzae (strain ATCC 42149 / RIB 40) (Yellow koji mold).